Reading from the N-terminus, the 434-residue chain is Tol-Pal system protein TolB (434 aa).

The N-terminal stretch at 1-24 is a signal peptide; that stretch reads MKFSAYLTTLFIVLFSLFIQTVQA.

The protein belongs to the TolB family. In terms of assembly, the Tol-Pal system is composed of five core proteins: the inner membrane proteins TolA, TolQ and TolR, the periplasmic protein TolB and the outer membrane protein Pal. They form a network linking the inner and outer membranes and the peptidoglycan layer.

The protein localises to the periplasm. Functionally, part of the Tol-Pal system, which plays a role in outer membrane invagination during cell division and is important for maintaining outer membrane integrity. This Histophilus somni (strain 2336) (Haemophilus somnus) protein is Tol-Pal system protein TolB.